We begin with the raw amino-acid sequence, 338 residues long: Probable replication factor C subunit 2 (338 aa).

60 to 67 (GPPGTGKT) serves as a coordination point for ATP.

It belongs to the activator 1 small subunits family. Heteropentamer of various rfc subunits that forms a complex (RFC) with PCNA in the presence of ATP.

It localises to the nucleus. Its function is as follows. The elongation of primed DNA templates by DNA polymerase delta and epsilon requires the action of the accessory proteins PCNA and activator 1. This chain is Probable replication factor C subunit 2 (rfc2), found in Dictyostelium discoideum (Social amoeba).